Consider the following 397-residue polypeptide: Sexual differentiation process protein isp7 (397 aa).

Residues P255–G353 enclose the Fe2OG dioxygenase domain.

This sequence belongs to the iron/ascorbate-dependent oxidoreductase family.

This chain is Sexual differentiation process protein isp7 (isp7), found in Schizosaccharomyces pombe (strain 972 / ATCC 24843) (Fission yeast).